The following is a 3587-amino-acid chain: Surfactin synthase subunit 1 (3587 aa).

3 Carrier domains span residues 971-1046, 2010-2085, and 3038-3112; these read APRN…DHRE, APRN…ASAE, and APTT…ERAE. Residues Ser-1006, Ser-2045, and Ser-3073 each carry the O-(pantetheine 4'-phosphoryl)serine modification.

It belongs to the ATP-dependent AMP-binding enzyme family. The cofactor is pantetheine 4'-phosphate.

It participates in antibiotic biosynthesis; surfactin biosynthesis. In terms of biological role, this protein is a multifunctional enzyme able to activate and polymerize the amino acids Leu, Glu, Asp and Val. Activation sites for these AA consist of individual domains. This is Surfactin synthase subunit 1 (srfAA) from Bacillus subtilis (strain 168).